A 341-amino-acid polypeptide reads, in one-letter code: MRVLGLETSCDETGVALYDSERGLLADALFSQIDLHRVYGGVVPELASRDHVKRMLPLIRQVLDESGCTPADIDAIAYTAGPGLVGALLVGASCAQAMAFAWGVPAVGVHHMEGHLLAPMLEEQPPRFPFVALLVSGGHTQLVRVDGIGRYQLLGESVDDAAGEAFDKTAKLIGLGYPGGPEIARLAERGTPGRFVFPRPMTDRPGLDFSFSGLKTFTLNTWQRCVEAGDDSEQTRCDIALAFQTAVVETLLIKCRRALKQTGLKNLVIAGGVSANQALRSGLEKMLGEMKGQVFYARPRFCTDNGAMIAYAGCQRLLAGQHDGPAISVQPRWPMESLPAV.

Residues His-111 and His-115 each coordinate Fe cation. Substrate is bound by residues 134-138 (LVSGG), Asp-167, Gly-180, and Asn-276. A Fe cation-binding site is contributed by Asp-304.

It belongs to the KAE1 / TsaD family. Fe(2+) is required as a cofactor.

Its subcellular location is the cytoplasm. It catalyses the reaction L-threonylcarbamoyladenylate + adenosine(37) in tRNA = N(6)-L-threonylcarbamoyladenosine(37) in tRNA + AMP + H(+). Functionally, required for the formation of a threonylcarbamoyl group on adenosine at position 37 (t(6)A37) in tRNAs that read codons beginning with adenine. Is involved in the transfer of the threonylcarbamoyl moiety of threonylcarbamoyl-AMP (TC-AMP) to the N6 group of A37, together with TsaE and TsaB. TsaD likely plays a direct catalytic role in this reaction. This Pseudomonas aeruginosa (strain ATCC 15692 / DSM 22644 / CIP 104116 / JCM 14847 / LMG 12228 / 1C / PRS 101 / PAO1) protein is tRNA N6-adenosine threonylcarbamoyltransferase.